Reading from the N-terminus, the 153-residue chain is Histone H2B.4 (153 aa).

Basic and acidic residues-rich tracts occupy residues 1–28 (MAPK…EKAP) and 36–53 (EKRL…EGKK). The disordered stretch occupies residues 1-61 (MAPKAEKKPA…KKAGRKKAKK (61 aa)). Residues Lys7 and Lys37 each carry the N6-acetyllysine modification. Lys149 participates in a covalent cross-link: Glycyl lysine isopeptide (Lys-Gly) (interchain with G-Cter in ubiquitin).

Belongs to the histone H2B family. In terms of assembly, the nucleosome is a histone octamer containing two molecules each of H2A, H2B, H3 and H4 assembled in one H3-H4 heterotetramer and two H2A-H2B heterodimers. The octamer wraps approximately 147 bp of DNA. In terms of processing, can be acetylated to form H2BK6ac and H2BK33ac. Monoubiquitinated by BRE1 to form H2BK143ub1 and deubiquitinated by UBP26. Required for heterochromatic histone H3 di- and trimethylation at H3K4me. May give a specific tag for epigenetic transcriptional activation.

It localises to the nucleus. The protein resides in the chromosome. Functionally, core component of nucleosome. Nucleosomes wrap and compact DNA into chromatin, limiting DNA accessibility to the cellular machineries which require DNA as a template. Histones thereby play a central role in transcription regulation, DNA repair, DNA replication and chromosomal stability. DNA accessibility is regulated via a complex set of post-translational modifications of histones, also called histone code, and nucleosome remodeling. In Oryza sativa subsp. indica (Rice), this protein is Histone H2B.4 (H2B.4).